A 292-amino-acid polypeptide reads, in one-letter code: 33 kDa chaperonin (292 aa).

Disulfide bonds link cysteine 230-cysteine 232 and cysteine 263-cysteine 266.

This sequence belongs to the HSP33 family. Post-translationally, under oxidizing conditions two disulfide bonds are formed involving the reactive cysteines. Under reducing conditions zinc is bound to the reactive cysteines and the protein is inactive.

The protein resides in the cytoplasm. Redox regulated molecular chaperone. Protects both thermally unfolding and oxidatively damaged proteins from irreversible aggregation. Plays an important role in the bacterial defense system toward oxidative stress. The chain is 33 kDa chaperonin from Shigella dysenteriae serotype 1 (strain Sd197).